Consider the following 600-residue polypeptide: Putative acetyltransferase MPN_114 (600 aa).

The active-site Proton acceptor is His323. CoA is bound at residue 396 to 409; it reads TKPLIKAKGIKNSE.

This sequence belongs to the carnitine/choline acetyltransferase family.

This chain is Putative acetyltransferase MPN_114, found in Mycoplasma pneumoniae (strain ATCC 29342 / M129 / Subtype 1) (Mycoplasmoides pneumoniae).